Here is a 417-residue protein sequence, read N- to C-terminus: Fructose-1,6-bisphosphatase 1, chloroplastic (417 aa).

A chloroplast-targeting transit peptide spans 1–59 (MAATAATTTSSHLLLSSSRHVASSSQPSILSPRSLFSNNGKRAPTGVRNHQYASGVRCM). The segment covering 24–35 (SSQPSILSPRSL) has biased composition (low complexity). Residues 24–48 (SSQPSILSPRSLFSNNGKRAPTGVR) are disordered. The residue at position 60 (A60) is an N-acetylalanine. E138, E167, D188, L190, and D191 together coordinate Mg(2+). 191-194 (DGSS) lines the substrate pocket. C233 and C238 are oxidised to a cystine. Substrate is bound by residues N297, Y329, Y347, Y349, and K359. E365 serves as a coordination point for Mg(2+).

This sequence belongs to the FBPase class 1 family. As to quaternary structure, homotetramer. Mg(2+) is required as a cofactor.

The protein localises to the plastid. The protein resides in the chloroplast stroma. It catalyses the reaction beta-D-fructose 1,6-bisphosphate + H2O = beta-D-fructose 6-phosphate + phosphate. It functions in the pathway carbohydrate biosynthesis; Calvin cycle. Catalyzes the irreversible reaction from fructose-1,6-bisphosphate to fructose-6-phosphate and inorganic phosphate, to regenerate the primary CO(2) acceptor molecule, ribulose-1,5-bisphosphate. Involved in the regulation of photosynthetic electron flow and sucrose synthesis. Its activity is critical for normal plant development and important for the regulation of a wide range of metabolic processes. In Arabidopsis thaliana (Mouse-ear cress), this protein is Fructose-1,6-bisphosphatase 1, chloroplastic.